A 1597-amino-acid polypeptide reads, in one-letter code: Pentafunctional AROM polypeptide (1597 aa).

The segment at 1 to 384 is 3-dehydroquinate synthase; it reads MGVPTKISIL…HEPRASTVSN (384 aa). Residues 44–46, 81–84, 114–116, and D119 contribute to the NAD(+) site; these read DTN, ESSK, and GGV. R130 provides a ligand contact to 7-phospho-2-dehydro-3-deoxy-D-arabino-heptonate. 139 to 140 is a binding site for NAD(+); the sequence is TT. Residues D146 and K152 each contribute to the 7-phospho-2-dehydro-3-deoxy-D-arabino-heptonate site. Residue K161 participates in NAD(+) binding. Residue N162 participates in 7-phospho-2-dehydro-3-deoxy-D-arabino-heptonate binding. NAD(+) is bound by residues 179 to 182 and N190; that span reads FLNT. E194 contributes to the Zn(2+) binding site. 7-phospho-2-dehydro-3-deoxy-D-arabino-heptonate contacts are provided by residues 194 to 197 and K250; that span reads EVIK. E260 functions as the Proton acceptor; for 3-dehydroquinate synthase activity in the catalytic mechanism. 7-phospho-2-dehydro-3-deoxy-D-arabino-heptonate is bound by residues 264 to 268 and H271; that span reads RNLLN. H271 is a Zn(2+) binding site. H275 (proton acceptor; for 3-dehydroquinate synthase activity) is an active-site residue. 2 residues coordinate 7-phospho-2-dehydro-3-deoxy-D-arabino-heptonate: H287 and K356. H287 is a Zn(2+) binding site. The EPSP synthase stretch occupies residues 397–842; that stretch reads VSPGVPKNLN…WDSLAQTFKV (446 aa). C824 serves as the catalytic For EPSP synthase activity. Residues 866–1057 are shikimate kinase; it reads ASIFIIGMRG…RSKENTFFVS (192 aa). Position 872-879 (872-879) interacts with ATP; that stretch reads GMRGAGKT. The segment at 1058–1278 is 3-dehydroquinase; that stretch reads LTLPDLAPAA…AAPGQLSARE (221 aa). H1181 acts as the Proton acceptor; for 3-dehydroquinate dehydratase activity in catalysis. Catalysis depends on K1209, which acts as the Schiff-base intermediate with substrate; for 3-dehydroquinate dehydratase activity. Residues 1291-1597 form a shikimate dehydrogenase region; it reads SKKFAVIGNP…VQPKDDDIST (307 aa).

It in the N-terminal section; belongs to the sugar phosphate cyclases superfamily. Dehydroquinate synthase family. This sequence in the 2nd section; belongs to the EPSP synthase family. In the 3rd section; belongs to the shikimate kinase family. The protein in the 4th section; belongs to the type-I 3-dehydroquinase family. It in the C-terminal section; belongs to the shikimate dehydrogenase family. Homodimer. Zn(2+) is required as a cofactor.

The protein localises to the cytoplasm. The catalysed reaction is 7-phospho-2-dehydro-3-deoxy-D-arabino-heptonate = 3-dehydroquinate + phosphate. It catalyses the reaction 3-dehydroquinate = 3-dehydroshikimate + H2O. It carries out the reaction shikimate + NADP(+) = 3-dehydroshikimate + NADPH + H(+). The enzyme catalyses shikimate + ATP = 3-phosphoshikimate + ADP + H(+). The catalysed reaction is 3-phosphoshikimate + phosphoenolpyruvate = 5-O-(1-carboxyvinyl)-3-phosphoshikimate + phosphate. It participates in metabolic intermediate biosynthesis; chorismate biosynthesis; chorismate from D-erythrose 4-phosphate and phosphoenolpyruvate: step 2/7. The protein operates within metabolic intermediate biosynthesis; chorismate biosynthesis; chorismate from D-erythrose 4-phosphate and phosphoenolpyruvate: step 3/7. Its pathway is metabolic intermediate biosynthesis; chorismate biosynthesis; chorismate from D-erythrose 4-phosphate and phosphoenolpyruvate: step 4/7. It functions in the pathway metabolic intermediate biosynthesis; chorismate biosynthesis; chorismate from D-erythrose 4-phosphate and phosphoenolpyruvate: step 5/7. It participates in metabolic intermediate biosynthesis; chorismate biosynthesis; chorismate from D-erythrose 4-phosphate and phosphoenolpyruvate: step 6/7. The AROM polypeptide catalyzes 5 consecutive enzymatic reactions in prechorismate polyaromatic amino acid biosynthesis. The sequence is that of Pentafunctional AROM polypeptide from Ajellomyces dermatitidis (strain ER-3 / ATCC MYA-2586) (Blastomyces dermatitidis).